We begin with the raw amino-acid sequence, 81 residues long: Sec-independent protein translocase protein TatA (81 aa).

A helical membrane pass occupies residues 1-21 (MGGISVWQLLIIAVIVVLLFG). The tract at residues 42–81 (AMSDEDSAKNEKDADFEPKSLEKQQQKEAAPETKKDKEQA) is disordered.

This sequence belongs to the TatA/E family. As to quaternary structure, the Tat system comprises two distinct complexes: a TatABC complex, containing multiple copies of TatA, TatB and TatC subunits, and a separate TatA complex, containing only TatA subunits. Substrates initially bind to the TatABC complex, which probably triggers association of the separate TatA complex to form the active translocon.

The protein localises to the cell inner membrane. Part of the twin-arginine translocation (Tat) system that transports large folded proteins containing a characteristic twin-arginine motif in their signal peptide across membranes. TatA could form the protein-conducting channel of the Tat system. The sequence is that of Sec-independent protein translocase protein TatA from Vibrio parahaemolyticus serotype O3:K6 (strain RIMD 2210633).